Here is a 494-residue protein sequence, read N- to C-terminus: Zinc finger and SCAN domain-containing protein 30 (494 aa).

One can recognise an SCAN box domain in the interval 48–130 (RQKFRQFSYS…TMLEELEKEL (83 aa)). Lysine 197 participates in a covalent cross-link: Glycyl lysine isopeptide (Lys-Gly) (interchain with G-Cter in SUMO2). 7 consecutive C2H2-type zinc fingers follow at residues 301–323 (YECF…QRIH), 329–351 (YACK…QRIH), 357–379 (YECC…RRIH), 385–407 (YECG…KKIH), 413–435 (YECI…QRIH), 441–463 (YECN…QRIH), and 469–491 (YECS…QRTH).

It belongs to the krueppel C2H2-type zinc-finger protein family.

It localises to the nucleus. In terms of biological role, may be involved in transcriptional regulation. The protein is Zinc finger and SCAN domain-containing protein 30 (ZSCAN30) of Homo sapiens (Human).